We begin with the raw amino-acid sequence, 507 residues long: ATP synthase subunit alpha (507 aa).

169 to 176 (GDRQIGKT) provides a ligand contact to ATP.

Belongs to the ATPase alpha/beta chains family. In terms of assembly, F-type ATPases have 2 components, CF(1) - the catalytic core - and CF(0) - the membrane proton channel. CF(1) has five subunits: alpha(3), beta(3), gamma(1), delta(1), epsilon(1). CF(0) has three main subunits: a(1), b(2) and c(9-12). The alpha and beta chains form an alternating ring which encloses part of the gamma chain. CF(1) is attached to CF(0) by a central stalk formed by the gamma and epsilon chains, while a peripheral stalk is formed by the delta and b chains.

The protein localises to the cell inner membrane. The catalysed reaction is ATP + H2O + 4 H(+)(in) = ADP + phosphate + 5 H(+)(out). Its function is as follows. Produces ATP from ADP in the presence of a proton gradient across the membrane. The alpha chain is a regulatory subunit. The sequence is that of ATP synthase subunit alpha from Desulfotalea psychrophila (strain LSv54 / DSM 12343).